The following is a 286-amino-acid chain: Release factor glutamine methyltransferase (286 aa).

Residues 122 to 126, Asp-145, Trp-173, and Asn-188 contribute to the S-adenosyl-L-methionine site; that span reads GTGTG. Substrate is bound at residue 188 to 191; it reads NPPY.

This sequence belongs to the protein N5-glutamine methyltransferase family. PrmC subfamily.

It carries out the reaction L-glutaminyl-[peptide chain release factor] + S-adenosyl-L-methionine = N(5)-methyl-L-glutaminyl-[peptide chain release factor] + S-adenosyl-L-homocysteine + H(+). Methylates the class 1 translation termination release factors RF1/PrfA and RF2/PrfB on the glutamine residue of the universally conserved GGQ motif. This is Release factor glutamine methyltransferase from Shewanella oneidensis (strain ATCC 700550 / JCM 31522 / CIP 106686 / LMG 19005 / NCIMB 14063 / MR-1).